Consider the following 556-residue polypeptide: Beta-caryophyllene synthase TPS9FN (556 aa).

Residues Arg273, Asp310, Asp314, Arg451, and Asp454 each contribute to the (2E,6E)-farnesyl diphosphate site. The Mg(2+) site is built by Asp310 and Asp314. Residues 310–314 (DDIYD) carry the DDXXD motif motif. Mg(2+) is bound by residues Asp454, Ser458, and Glu462.

It belongs to the terpene synthase family. Tpsb subfamily. The cofactor is Mg(2+). It depends on Mn(2+) as a cofactor. Expressed in glandular trichomes two to four weeks after flowering onset.

It catalyses the reaction (2E,6E)-farnesyl diphosphate = (-)-(E)-beta-caryophyllene + diphosphate. The catalysed reaction is (2E,6E)-farnesyl diphosphate = alpha-humulene + diphosphate. It functions in the pathway secondary metabolite biosynthesis; terpenoid biosynthesis. Its function is as follows. Involved in sesquiterpene olefins biosynthesis, constituants of cannabinoids and terpenoids-rich resins. Catalyzes mainly the conversion of (2E)-farnesyl diphosphate to beta-caryophyllene and alpha-humulene. Can also use (2E)-geranyl diphosphate as substrate with low efficiency. In Cannabis sativa (Hemp), this protein is Beta-caryophyllene synthase TPS9FN.